The following is a 223-amino-acid chain: Deoxyribose-phosphate aldolase (223 aa).

Catalysis depends on aspartate 89, which acts as the Proton donor/acceptor. Lysine 152 acts as the Schiff-base intermediate with acetaldehyde in catalysis. The active-site Proton donor/acceptor is the lysine 181.

It belongs to the DeoC/FbaB aldolase family. DeoC type 1 subfamily.

The protein resides in the cytoplasm. It carries out the reaction 2-deoxy-D-ribose 5-phosphate = D-glyceraldehyde 3-phosphate + acetaldehyde. The protein operates within carbohydrate degradation; 2-deoxy-D-ribose 1-phosphate degradation; D-glyceraldehyde 3-phosphate and acetaldehyde from 2-deoxy-alpha-D-ribose 1-phosphate: step 2/2. Functionally, catalyzes a reversible aldol reaction between acetaldehyde and D-glyceraldehyde 3-phosphate to generate 2-deoxy-D-ribose 5-phosphate. This chain is Deoxyribose-phosphate aldolase, found in Bacillus cytotoxicus (strain DSM 22905 / CIP 110041 / 391-98 / NVH 391-98).